A 316-amino-acid chain; its full sequence is Porphobilinogen deaminase (316 aa).

Cys-249 carries the post-translational modification S-(dipyrrolylmethanemethyl)cysteine.

It belongs to the HMBS family. In terms of assembly, monomer. The cofactor is dipyrromethane.

It carries out the reaction 4 porphobilinogen + H2O = hydroxymethylbilane + 4 NH4(+). Its pathway is porphyrin-containing compound metabolism; protoporphyrin-IX biosynthesis; coproporphyrinogen-III from 5-aminolevulinate: step 2/4. Functionally, tetrapolymerization of the monopyrrole PBG into the hydroxymethylbilane pre-uroporphyrinogen in several discrete steps. The protein is Porphobilinogen deaminase of Nitrobacter hamburgensis (strain DSM 10229 / NCIMB 13809 / X14).